Here is a 192-residue protein sequence, read N- to C-terminus: Ribosome maturation factor RimM (192 aa).

The PRC barrel domain occupies 97–172 (EDEYYLADLI…VVLADPPALV (76 aa)). The disordered stretch occupies residues 168 to 192 (PPALVGEPEGPESPAEDDDGERHYD).

This sequence belongs to the RimM family. Binds ribosomal protein uS19.

It is found in the cytoplasm. In terms of biological role, an accessory protein needed during the final step in the assembly of 30S ribosomal subunit, possibly for assembly of the head region. Essential for efficient processing of 16S rRNA. May be needed both before and after RbfA during the maturation of 16S rRNA. It has affinity for free ribosomal 30S subunits but not for 70S ribosomes. This is Ribosome maturation factor RimM from Caulobacter sp. (strain K31).